A 146-amino-acid polypeptide reads, in one-letter code: Ecotin-like protein 1 (146 aa).

The protein belongs to the protease inhibitor I11 (ecotin) family.

The chain is Ecotin-like protein 1 (ISP1) from Leishmania major.